Consider the following 435-residue polypeptide: 3-phosphoshikimate 1-carboxyvinyltransferase (435 aa).

3-phosphoshikimate contacts are provided by K22, S23, and R27. A phosphoenolpyruvate-binding site is contributed by K22. 2 residues coordinate phosphoenolpyruvate: G95 and R123. Residues S168, Q170, D319, and K346 each contribute to the 3-phosphoshikimate site. Q170 serves as a coordination point for phosphoenolpyruvate. The Proton acceptor role is filled by D319. Positions 350 and 393 each coordinate phosphoenolpyruvate.

It belongs to the EPSP synthase family. Monomer.

The protein resides in the cytoplasm. The enzyme catalyses 3-phosphoshikimate + phosphoenolpyruvate = 5-O-(1-carboxyvinyl)-3-phosphoshikimate + phosphate. It functions in the pathway metabolic intermediate biosynthesis; chorismate biosynthesis; chorismate from D-erythrose 4-phosphate and phosphoenolpyruvate: step 6/7. Catalyzes the transfer of the enolpyruvyl moiety of phosphoenolpyruvate (PEP) to the 5-hydroxyl of shikimate-3-phosphate (S3P) to produce enolpyruvyl shikimate-3-phosphate and inorganic phosphate. The polypeptide is 3-phosphoshikimate 1-carboxyvinyltransferase (Chloroflexus aggregans (strain MD-66 / DSM 9485)).